The chain runs to 363 residues: UDP-N-acetylglucosamine--N-acetylmuramyl-(pentapeptide) pyrophosphoryl-undecaprenol N-acetylglucosamine transferase (363 aa).

Residues 7–9 (TGG), asparagine 125, serine 196, isoleucine 251, and glutamine 296 each bind UDP-N-acetyl-alpha-D-glucosamine.

This sequence belongs to the glycosyltransferase 28 family. MurG subfamily.

It is found in the cell membrane. The enzyme catalyses Mur2Ac(oyl-L-Ala-gamma-D-Glu-L-Lys-D-Ala-D-Ala)-di-trans,octa-cis-undecaprenyl diphosphate + UDP-N-acetyl-alpha-D-glucosamine = beta-D-GlcNAc-(1-&gt;4)-Mur2Ac(oyl-L-Ala-gamma-D-Glu-L-Lys-D-Ala-D-Ala)-di-trans,octa-cis-undecaprenyl diphosphate + UDP + H(+). It participates in cell wall biogenesis; peptidoglycan biosynthesis. In terms of biological role, cell wall formation. Catalyzes the transfer of a GlcNAc subunit on undecaprenyl-pyrophosphoryl-MurNAc-pentapeptide (lipid intermediate I) to form undecaprenyl-pyrophosphoryl-MurNAc-(pentapeptide)GlcNAc (lipid intermediate II). This chain is UDP-N-acetylglucosamine--N-acetylmuramyl-(pentapeptide) pyrophosphoryl-undecaprenol N-acetylglucosamine transferase, found in Latilactobacillus sakei subsp. sakei (strain 23K) (Lactobacillus sakei subsp. sakei).